Here is a 240-residue protein sequence, read N- to C-terminus: 1-(5-phosphoribosyl)-5-[(5-phosphoribosylamino)methylideneamino] imidazole-4-carboxamide isomerase (240 aa).

Aspartate 9 acts as the Proton acceptor in catalysis. The active-site Proton donor is aspartate 131.

It belongs to the HisA/HisF family.

It localises to the cytoplasm. The enzyme catalyses 1-(5-phospho-beta-D-ribosyl)-5-[(5-phospho-beta-D-ribosylamino)methylideneamino]imidazole-4-carboxamide = 5-[(5-phospho-1-deoxy-D-ribulos-1-ylimino)methylamino]-1-(5-phospho-beta-D-ribosyl)imidazole-4-carboxamide. Its pathway is amino-acid biosynthesis; L-histidine biosynthesis; L-histidine from 5-phospho-alpha-D-ribose 1-diphosphate: step 4/9. This Azobacteroides pseudotrichonymphae genomovar. CFP2 protein is 1-(5-phosphoribosyl)-5-[(5-phosphoribosylamino)methylideneamino] imidazole-4-carboxamide isomerase.